A 227-amino-acid polypeptide reads, in one-letter code: PKHD-type hydroxylase Reut_B4660 (227 aa).

The Fe2OG dioxygenase domain maps to 78–178 (KVFPPLFNRY…RVSSFFWIQS (101 aa)). Residues H96, D98, and H159 each coordinate Fe cation. R169 lines the 2-oxoglutarate pocket.

Fe(2+) is required as a cofactor. The cofactor is L-ascorbate.

The chain is PKHD-type hydroxylase Reut_B4660 from Cupriavidus pinatubonensis (strain JMP 134 / LMG 1197) (Cupriavidus necator (strain JMP 134)).